Here is a 391-residue protein sequence, read N- to C-terminus: Phosphoprotein (391 aa).

Residues T10, T16, and T39 each carry the phosphothreonine modification. The segment covering 55–65 (KNIQYPTTSHQ) has biased composition (polar residues). Residues 55-90 (KNIQYPTTSHQGSKSKGRGSGARPIIVSSSEGGTGG) are disordered. At S69 the chain carries Phosphoserine. Phosphothreonine is present on residues T91, T150, and T165. A disordered region spans residues 145–208 (TSTPVTEFKR…PQQDSTPANV (64 aa)). Phosphoserine is present on S188. Residues 216 to 279 (ISANEIMDLL…MATVKIMDPG (64 aa)) form a multimerization region. A coiled-coil region spans residues 218-245 (ANEIMDLLRGMDARLQHLEQKVDKVLAQ). T250 is subject to Phosphothreonine. S257 carries the post-translational modification Phosphoserine. A phosphothreonine mark is found at T258 and T282. Phosphoserine occurs at positions 292 and 294. The residue at position 298 (T298) is a Phosphothreonine. 2 positions are modified to phosphoserine: S301 and S374. Residues 343-391 (AGRKVMITKMITDCVANPQMKQVFEQRLAKASTEDALNDIKRDIIRSAI) are interaction with the nucleoprotein. A Phosphothreonine modification is found at T375.

Belongs to the rubulavirus/avulavirus P protein family. As to quaternary structure, homotetramer. Interacts (via multimerization domain) with polymerase L; this interaction forms the polymerase L-P complex. Interacts (via N-terminus) with N0 (via Ncore); this interaction allows P to chaperon N0 to avoid N polymerization before encapsidation. Interacts (via C-terminus) with N-RNA template; this interaction positions the polymerase on the template for both transcription and replication. Interacts with host RPS6KB1 kinase; this interaction may play a role in the viral replication and transcription.

In terms of biological role, essential cofactor of the RNA polymerase L that plays a central role in the transcription and replication by forming the polymerase complex with RNA polymerase L and recruiting L to the genomic N-RNA template for RNA synthesis. Also plays a central role in the encapsidation of nascent RNA chains by forming the encapsidation complex with the nucleocapsid protein N (N-P complex). Acts as a chaperone for newly synthesized free N protein, so-called N0, allowing encapsidation of nascent RNA chains during replication. The nucleoprotein protein N prevents excessive phosphorylation of P, which leads to down-regulation of viral transcription/ replication. Participates, together with N, in the formation of viral factories (viroplasms), which are large inclusions in the host cytoplasm where replication takes place. This is Phosphoprotein from Mumps virus genotype B (strain Miyahara vaccine) (MuV).